We begin with the raw amino-acid sequence, 876 residues long: AP-5 complex subunit beta-1 (876 aa).

Probably part of the adaptor protein complex 5 (AP-5), a tetramer composed of AP5B1, AP5M1, AP5S1 and AP5Z1. Interacts with ZFYVE26 and SPG11.

As part of AP-5, a probable fifth adaptor protein complex it may be involved in endosomal transport. In Mus musculus (Mouse), this protein is AP-5 complex subunit beta-1 (Ap5b1).